A 1404-amino-acid chain; its full sequence is DNA-directed RNA polymerase subunit beta' (1404 aa).

Zn(2+) contacts are provided by Cys-70, Cys-72, Cys-85, and Cys-88. 3 residues coordinate Mg(2+): Asp-460, Asp-462, and Asp-464. Zn(2+) contacts are provided by Cys-814, Cys-888, Cys-895, and Cys-898.

This sequence belongs to the RNA polymerase beta' chain family. As to quaternary structure, the RNAP catalytic core consists of 2 alpha, 1 beta, 1 beta' and 1 omega subunit. When a sigma factor is associated with the core the holoenzyme is formed, which can initiate transcription. The cofactor is Mg(2+). It depends on Zn(2+) as a cofactor.

The catalysed reaction is RNA(n) + a ribonucleoside 5'-triphosphate = RNA(n+1) + diphosphate. Functionally, DNA-dependent RNA polymerase catalyzes the transcription of DNA into RNA using the four ribonucleoside triphosphates as substrates. This chain is DNA-directed RNA polymerase subunit beta', found in Shewanella loihica (strain ATCC BAA-1088 / PV-4).